The following is a 956-amino-acid chain: Protein translocase subunit SecA (956 aa).

ATP contacts are provided by residues Gln-87, 105-109 (GEGKT), and Asp-524. Zn(2+) contacts are provided by Cys-940, Cys-942, Cys-951, and His-952.

It belongs to the SecA family. In terms of assembly, monomer and homodimer. Part of the essential Sec protein translocation apparatus which comprises SecA, SecYEG and auxiliary proteins SecDF-YajC and YidC. Zn(2+) serves as cofactor.

It localises to the cell inner membrane. It is found in the cytoplasm. The catalysed reaction is ATP + H2O + cellular proteinSide 1 = ADP + phosphate + cellular proteinSide 2.. Part of the Sec protein translocase complex. Interacts with the SecYEG preprotein conducting channel. Has a central role in coupling the hydrolysis of ATP to the transfer of proteins into and across the cell membrane, serving both as a receptor for the preprotein-SecB complex and as an ATP-driven molecular motor driving the stepwise translocation of polypeptide chains across the membrane. This is Protein translocase subunit SecA from Beijerinckia indica subsp. indica (strain ATCC 9039 / DSM 1715 / NCIMB 8712).